Consider the following 339-residue polypeptide: Ketol-acid reductoisomerase (NADP(+)) (339 aa).

Residues 1–182 (MRVYYDRDAD…GGGRSGIIET (182 aa)) form the KARI N-terminal Rossmann domain. NADP(+) contacts are provided by residues 24 to 27 (YGSQ), lysine 48, serine 51, threonine 53, and 83 to 86 (DELQ). Residue histidine 108 is part of the active site. Residue glycine 134 participates in NADP(+) binding. In terms of domain architecture, KARI C-terminal knotted spans 183-328 (NFREECETDL…AKLRGMMPWI (146 aa)). Mg(2+) contacts are provided by aspartate 191, glutamate 195, glutamate 227, and glutamate 231. A substrate-binding site is contributed by serine 252.

It belongs to the ketol-acid reductoisomerase family. The cofactor is Mg(2+).

The enzyme catalyses (2R)-2,3-dihydroxy-3-methylbutanoate + NADP(+) = (2S)-2-acetolactate + NADPH + H(+). The catalysed reaction is (2R,3R)-2,3-dihydroxy-3-methylpentanoate + NADP(+) = (S)-2-ethyl-2-hydroxy-3-oxobutanoate + NADPH + H(+). The protein operates within amino-acid biosynthesis; L-isoleucine biosynthesis; L-isoleucine from 2-oxobutanoate: step 2/4. It participates in amino-acid biosynthesis; L-valine biosynthesis; L-valine from pyruvate: step 2/4. In terms of biological role, involved in the biosynthesis of branched-chain amino acids (BCAA). Catalyzes an alkyl-migration followed by a ketol-acid reduction of (S)-2-acetolactate (S2AL) to yield (R)-2,3-dihydroxy-isovalerate. In the isomerase reaction, S2AL is rearranged via a Mg-dependent methyl migration to produce 3-hydroxy-3-methyl-2-ketobutyrate (HMKB). In the reductase reaction, this 2-ketoacid undergoes a metal-dependent reduction by NADPH to yield (R)-2,3-dihydroxy-isovalerate. This is Ketol-acid reductoisomerase (NADP(+)) from Rhizobium johnstonii (strain DSM 114642 / LMG 32736 / 3841) (Rhizobium leguminosarum bv. viciae).